The chain runs to 179 residues: Large ribosomal subunit protein uL5 (179 aa).

It belongs to the universal ribosomal protein uL5 family. As to quaternary structure, part of the 50S ribosomal subunit; part of the 5S rRNA/L5/L18/L25 subcomplex. Contacts the 5S rRNA and the P site tRNA. Forms a bridge to the 30S subunit in the 70S ribosome.

In terms of biological role, this is one of the proteins that bind and probably mediate the attachment of the 5S RNA into the large ribosomal subunit, where it forms part of the central protuberance. In the 70S ribosome it contacts protein S13 of the 30S subunit (bridge B1b), connecting the 2 subunits; this bridge is implicated in subunit movement. Contacts the P site tRNA; the 5S rRNA and some of its associated proteins might help stabilize positioning of ribosome-bound tRNAs. The polypeptide is Large ribosomal subunit protein uL5 (Burkholderia multivorans (strain ATCC 17616 / 249)).